Reading from the N-terminus, the 396-residue chain is Elongation factor Tu (396 aa).

The 196-residue stretch at 10-205 (KSHANIGTIG…AVDEYIPTPE (196 aa)) folds into the tr-type G domain. The G1 stretch occupies residues 19 to 26 (GHVDHGKT). 19–26 (GHVDHGKT) provides a ligand contact to GTP. Thr-26 contributes to the Mg(2+) binding site. The interval 61-65 (GITIS) is G2. The tract at residues 82 to 85 (DCPG) is G3. Residues 82-86 (DCPGH) and 137-140 (NKCD) contribute to the GTP site. Positions 137 to 140 (NKCD) are G4. A G5 region spans residues 175–177 (SAL).

This sequence belongs to the TRAFAC class translation factor GTPase superfamily. Classic translation factor GTPase family. EF-Tu/EF-1A subfamily. In terms of assembly, monomer.

It localises to the cytoplasm. The enzyme catalyses GTP + H2O = GDP + phosphate + H(+). GTP hydrolase that promotes the GTP-dependent binding of aminoacyl-tRNA to the A-site of ribosomes during protein biosynthesis. The polypeptide is Elongation factor Tu (Bacillus velezensis (strain DSM 23117 / BGSC 10A6 / LMG 26770 / FZB42) (Bacillus amyloliquefaciens subsp. plantarum)).